Here is a 246-residue protein sequence, read N- to C-terminus: uncharacterized protein (246 aa).

This is an uncharacterized protein from Escherichia coli O157:H7.